The primary structure comprises 999 residues: Ulvan lyase, long isoform (999 aa).

Residues 1–21 form the signal peptide; it reads MKCLKTLLVSTTLLTAFSLNA. Residue 126 to 127 participates in substrate binding; that stretch reads SH. The active-site Proton donor/acceptor is His-127. The Ca(2+) site is built by Asp-189, Asp-199, and Lys-201. The substrate site is built by Tyr-280 and Arg-297. Residues Asp-300, Asp-303, and Tyr-305 each coordinate Ca(2+). Tyr-361 contributes to the substrate binding site.

Belongs to the polysaccharide lyase 24 family.

Functionally, ulvan lyase involved in ulvan degradation. Ulvan is the main polysaccharide component of the Ulvales (green seaweed) cell wall. It is composed of disaccharide building blocks comprising 3-sulfated rhamnose (Rha3S) linked to D-glucuronic acid (GlcA), L-iduronic acid (IduA), or D-xylose (Xyl). Ulvan lyase catalyzes preferentially the endolytic cleavage of the glycosidic bond between Rha3S and the uronic acid GlcA, but not IduA, producing oligosaccharides that have unsaturated 4-deoxy-L-threo-hex-4-enopyranosiduronic acid (deltaUA) at the non-reducing end. The most abundant end products in the degradation of the ulvan polysaccharide were deltaUA-Rha3S disaccharides and deltaUA-Rha3S-IduA-Rha3S and deltaUA-Rha3S-Xyl-Rha3S tetrasaccharides. The sequence is that of Ulvan lyase, long isoform from Alteromonas sp. (strain LOR).